Here is a 214-residue protein sequence, read N- to C-terminus: SINYKNMPHQHLLTLLSLLPVGSNISTWWNFGSMLLACLMTQIITGFFLAIHYTANINLAFSSIIHLSRDVPCGWIMQNTHAISASLFFICIYIHIARGLYYGSYLYKEVWLSGTTLLIILMATAFFGYVLPWGQMSFWAATVITNLLTAIPYLGTTLTTWLWGGFAINDPTLTRFFALHFIFPFIIISMSSIHILLLHNEGSSNPLGTNSDIG.

Helical transmembrane passes span 31-51 (FGSM…FLAI), 75-96 (WIMQ…YIHI), 111-131 (WLSG…GYVL), and 176-196 (FFAL…IHIL). The heme b site is built by H81 and H95. Heme b-binding residues include H180 and H194. H199 serves as a coordination point for a ubiquinone.

This sequence belongs to the cytochrome b family. As to quaternary structure, the cytochrome bc1 complex contains 3 respiratory subunits (MT-CYB, CYC1 and UQCRFS1), 2 core proteins (UQCRC1 and UQCRC2) and probably 6 low-molecular weight proteins. Requires heme b as cofactor.

The protein localises to the mitochondrion inner membrane. In terms of biological role, component of the ubiquinol-cytochrome c reductase complex (complex III or cytochrome b-c1 complex) that is part of the mitochondrial respiratory chain. The b-c1 complex mediates electron transfer from ubiquinol to cytochrome c. Contributes to the generation of a proton gradient across the mitochondrial membrane that is then used for ATP synthesis. The polypeptide is Cytochrome b (MT-CYB) (Bothrops bilineatus (Green jararaca)).